Here is a 268-residue protein sequence, read N- to C-terminus: Thiazole synthase (268 aa).

Lys-111 acts as the Schiff-base intermediate with DXP in catalysis. 1-deoxy-D-xylulose 5-phosphate contacts are provided by residues Gly-172, 198–199 (AG), and 220–221 (NT).

Belongs to the ThiG family. As to quaternary structure, homotetramer. Forms heterodimers with either ThiH or ThiS.

Its subcellular location is the cytoplasm. The catalysed reaction is [ThiS sulfur-carrier protein]-C-terminal-Gly-aminoethanethioate + 2-iminoacetate + 1-deoxy-D-xylulose 5-phosphate = [ThiS sulfur-carrier protein]-C-terminal Gly-Gly + 2-[(2R,5Z)-2-carboxy-4-methylthiazol-5(2H)-ylidene]ethyl phosphate + 2 H2O + H(+). It participates in cofactor biosynthesis; thiamine diphosphate biosynthesis. Functionally, catalyzes the rearrangement of 1-deoxy-D-xylulose 5-phosphate (DXP) to produce the thiazole phosphate moiety of thiamine. Sulfur is provided by the thiocarboxylate moiety of the carrier protein ThiS. In vitro, sulfur can be provided by H(2)S. In Caulobacter sp. (strain K31), this protein is Thiazole synthase.